The following is an 88-amino-acid chain: Small ribosomal subunit protein bS20 (88 aa).

2 disordered regions span residues 1–23 (MANT…VNKA) and 65–88 (GVMH…SLSA).

It belongs to the bacterial ribosomal protein bS20 family.

In terms of biological role, binds directly to 16S ribosomal RNA. This chain is Small ribosomal subunit protein bS20, found in Rhizobium meliloti (strain 1021) (Ensifer meliloti).